The primary structure comprises 159 residues: Ribosomal RNA large subunit methyltransferase H (159 aa).

Residues leucine 76, glycine 108, and 127 to 132 (FSKMTL) each bind S-adenosyl-L-methionine.

Belongs to the RNA methyltransferase RlmH family. Homodimer.

The protein localises to the cytoplasm. The catalysed reaction is pseudouridine(1915) in 23S rRNA + S-adenosyl-L-methionine = N(3)-methylpseudouridine(1915) in 23S rRNA + S-adenosyl-L-homocysteine + H(+). Its function is as follows. Specifically methylates the pseudouridine at position 1915 (m3Psi1915) in 23S rRNA. The sequence is that of Ribosomal RNA large subunit methyltransferase H from Bacillus cereus (strain ATCC 14579 / DSM 31 / CCUG 7414 / JCM 2152 / NBRC 15305 / NCIMB 9373 / NCTC 2599 / NRRL B-3711).